The primary structure comprises 249 residues: DnaJ homolog subfamily C member 5 homolog (249 aa).

Ser12 carries the post-translational modification Phosphoserine. At Thr13 the chain carries Phosphothreonine. A phosphoserine mark is found at Ser14 and Ser17. In terms of domain architecture, J spans 15–84 (GDSLYEILGL…RNIYDNYGSL (70 aa)). Residue Tyr19 is modified to Phosphotyrosine. Over residues 146 to 162 (HDQYSHLNRPDGNREGN) the composition is skewed to basic and acidic residues. 2 disordered regions span residues 146-177 (HDQY…LEDV) and 218-249 (PFTG…NQKY). A compositionally biased stretch (polar residues) spans 227 to 241 (NENTSLNTTEQTTYT).

Post-translationally, fatty acylated. Heavily palmitoylated in the cysteine string motif. In terms of tissue distribution, expressed in wide range of synaptic terminals: embryonic nervous system, larval neuromuscular junctions, adult visual system (neuropil of optic ganglia and terminal of R1-8 photoreceptors) and thoracic neuromuscular junctions. Also expressed in non-neuronal cells: follicle cells, spermatheca, testis and ejaculatory bulb. Low level of expression is found in many neuronal and non-neuronal tissues.

The protein localises to the membrane. May have an important role in presynaptic function. The chain is DnaJ homolog subfamily C member 5 homolog from Drosophila melanogaster (Fruit fly).